The following is a 428-amino-acid chain: Phosphoribosylamine--glycine ligase (428 aa).

Residues lysine 109–glutamine 316 enclose the ATP-grasp domain. Valine 135–serine 196 is an ATP binding site. Glutamate 286 and asparagine 288 together coordinate Mg(2+).

Belongs to the GARS family. Mg(2+) serves as cofactor. The cofactor is Mn(2+).

The catalysed reaction is 5-phospho-beta-D-ribosylamine + glycine + ATP = N(1)-(5-phospho-beta-D-ribosyl)glycinamide + ADP + phosphate + H(+). The protein operates within purine metabolism; IMP biosynthesis via de novo pathway; N(1)-(5-phospho-D-ribosyl)glycinamide from 5-phospho-alpha-D-ribose 1-diphosphate: step 2/2. This is Phosphoribosylamine--glycine ligase from Yersinia pestis.